A 729-amino-acid polypeptide reads, in one-letter code: DNA topoisomerase 3 (729 aa).

In terms of domain architecture, Toprim spans 3–136; sequence KSVVIAEKPS…IKRLWISSVT (134 aa). E9 and D105 together coordinate Mg(2+). The region spanning 153 to 594 is the Topo IA-type catalytic domain; it reads YDNLYASAVA…EMKNYTKEIV (442 aa). The tract at residues 187 to 192 is interaction with DNA; that stretch reads NCGRVQ. Catalysis depends on Y310, which acts as the O-(5'-phospho-DNA)-tyrosine intermediate. Basic and acidic residues predominate over residues 686–713; it reads ERRKKESGNKADKRDVQKYMKQQKKEEE. The segment at 686-718 is disordered; it reads ERRKKESGNKADKRDVQKYMKQQKKEEEPLNNP.

It belongs to the type IA topoisomerase family. It depends on Mg(2+) as a cofactor.

The enzyme catalyses ATP-independent breakage of single-stranded DNA, followed by passage and rejoining.. In terms of biological role, releases the supercoiling and torsional tension of DNA, which is introduced during the DNA replication and transcription, by transiently cleaving and rejoining one strand of the DNA duplex. Introduces a single-strand break via transesterification at a target site in duplex DNA. The scissile phosphodiester is attacked by the catalytic tyrosine of the enzyme, resulting in the formation of a DNA-(5'-phosphotyrosyl)-enzyme intermediate and the expulsion of a 3'-OH DNA strand. The free DNA strand then undergoes passage around the unbroken strand, thus removing DNA supercoils. Finally, in the religation step, the DNA 3'-OH attacks the covalent intermediate to expel the active-site tyrosine and restore the DNA phosphodiester backbone. The polypeptide is DNA topoisomerase 3 (Bacillus cereus (strain ATCC 10987 / NRS 248)).